The sequence spans 489 residues: Acetyl-coenzyme A carboxylase carboxyl transferase subunit beta, chloroplastic (489 aa).

One can recognise a CoA carboxyltransferase N-terminal domain in the interval 222–489 (LWVQCENCYG…FFPLNSNSIK (268 aa)). Residues C226, C229, C245, and C248 each coordinate Zn(2+). The C4-type zinc-finger motif lies at 226 to 248 (CENCYGLNYKKFFRSKMNICEQC).

This sequence belongs to the AccD/PCCB family. As to quaternary structure, acetyl-CoA carboxylase is a heterohexamer composed of biotin carboxyl carrier protein, biotin carboxylase and 2 subunits each of ACCase subunit alpha and ACCase plastid-coded subunit beta (accD). It depends on Zn(2+) as a cofactor.

The protein localises to the plastid. It localises to the chloroplast stroma. The catalysed reaction is N(6)-carboxybiotinyl-L-lysyl-[protein] + acetyl-CoA = N(6)-biotinyl-L-lysyl-[protein] + malonyl-CoA. The protein operates within lipid metabolism; malonyl-CoA biosynthesis; malonyl-CoA from acetyl-CoA: step 1/1. Functionally, component of the acetyl coenzyme A carboxylase (ACC) complex. Biotin carboxylase (BC) catalyzes the carboxylation of biotin on its carrier protein (BCCP) and then the CO(2) group is transferred by the transcarboxylase to acetyl-CoA to form malonyl-CoA. This is Acetyl-coenzyme A carboxylase carboxyl transferase subunit beta, chloroplastic from Buxus microphylla (Littleleaf boxwood).